The following is a 266-amino-acid chain: Glycine--tRNA ligase beta subunit (266 aa).

Belongs to the class-II aminoacyl-tRNA synthetase family. In terms of assembly, tetramer of two alpha and two beta subunits.

It localises to the cytoplasm. It carries out the reaction tRNA(Gly) + glycine + ATP = glycyl-tRNA(Gly) + AMP + diphosphate. The sequence is that of Glycine--tRNA ligase beta subunit (glyS) from Moraxella catarrhalis (Branhamella catarrhalis).